The sequence spans 332 residues: Putative D-threonate 4-phosphate dehydrogenase (332 aa).

Residues histidine 138 and threonine 139 each contribute to the substrate site. Residues histidine 168, histidine 211, and histidine 266 each coordinate a divalent metal cation. Substrate-binding residues include lysine 274 and arginine 292.

Belongs to the PdxA family. PdxA2 subfamily. As to quaternary structure, homodimer. The cofactor is a divalent metal cation.

The enzyme catalyses 4-O-phospho-D-threonate + NAD(+) = dihydroxyacetone phosphate + CO2 + NADH. In terms of biological role, catalyzes the NAD-dependent oxidation and subsequent decarboxylation of D-threonate 4-phosphate to produce dihydroxyacetone phosphate (DHAP). The polypeptide is Putative D-threonate 4-phosphate dehydrogenase (Fusobacterium nucleatum subsp. nucleatum (strain ATCC 25586 / DSM 15643 / BCRC 10681 / CIP 101130 / JCM 8532 / KCTC 2640 / LMG 13131 / VPI 4355)).